The sequence spans 194 residues: Erythropoietin (194 aa).

The first 27 residues, 1 to 27, serve as a signal peptide directing secretion; the sequence is MGARDCTPLLLLLLSFLLFPLGLPVLG. Disulfide bonds link C34–C189 and C56–C60. An N-linked (GlcNAc...) asparagine glycan is attached at N51. N65 and N110 each carry an N-linked (GlcNAc...) asparagine glycan.

This sequence belongs to the EPO/TPO family. In terms of tissue distribution, produced by kidney or liver of adult mammals and by liver of fetal or neonatal mammals.

The protein localises to the secreted. Hormone involved in the regulation of erythrocyte proliferation and differentiation and the maintenance of a physiological level of circulating erythrocyte mass. Binds to EPOR leading to EPOR dimerization and JAK2 activation thereby activating specific downstream effectors, including STAT1 and STAT3. This is Erythropoietin (EPO) from Ovis aries (Sheep).